The primary structure comprises 201 residues: Molybdenum cofactor guanylyltransferase (201 aa).

Residues 15-17 (LAG), Lys28, Asp74, and Asp104 contribute to the GTP site. Position 104 (Asp104) interacts with Mg(2+).

This sequence belongs to the MobA family. As to quaternary structure, monomer. Mg(2+) is required as a cofactor.

It localises to the cytoplasm. The catalysed reaction is Mo-molybdopterin + GTP + H(+) = Mo-molybdopterin guanine dinucleotide + diphosphate. Its function is as follows. Transfers a GMP moiety from GTP to Mo-molybdopterin (Mo-MPT) cofactor (Moco or molybdenum cofactor) to form Mo-molybdopterin guanine dinucleotide (Mo-MGD) cofactor. The polypeptide is Molybdenum cofactor guanylyltransferase (Pseudomonas syringae pv. syringae (strain B728a)).